A 404-amino-acid polypeptide reads, in one-letter code: Epoxide hydrolase 1 (404 aa).

The chain crosses the membrane as a helical span at residues 74–96 (ILVRLLQFYYFVKFSAILFLGFA). The AB hydrolase-1 domain occupies 140–389 (PLMLFIHGYP…ASHWVQQDEP (250 aa)). Asp-215 acts as the Nucleophile in catalysis. Catalysis depends on Tyr-327, which acts as the Proton donor. His-382 acts as the Proton acceptor in catalysis.

Belongs to the AB hydrolase superfamily. Epoxide hydrolase family.

It localises to the membrane. The enzyme catalyses an epoxide + H2O = an ethanediol. The catalysed reaction is 8,9-epoxy-(5Z,11Z,14Z)-eicosatrienoate + H2O = 8,9-dihydroxy-(5Z,11Z,14Z)-eicosatrienoate. It catalyses the reaction 11,12-epoxy-(5Z,8Z,14Z)-eicosatrienoate + H2O = 11,12-dihydroxy-(5Z,8Z,14Z)-eicosatrienoate. It carries out the reaction 14,15-epoxy-(5Z,8Z,11Z)-eicosatrienoate + H2O = 14,15-dihydroxy-(5Z,8Z,11Z)-eicosatrienoate. The enzyme catalyses 12,13-epoxy-(9Z)-octadecenoate + H2O = 12,13-dihydroxy-(9Z)-octadecenoate. The catalysed reaction is 9,10-epoxy-(12Z)-octadecenoate + H2O = 9,10-dihydroxy-(12Z)-octadecenoate. Its pathway is lipid metabolism. Catalyzes the hydrolysis of epoxide-containing fatty acids. Active against epoxyeicosatrienoic acids (EETs) including 8,9-epoxy-(5Z,11Z,14Z)-eicosatrienoate (8,9-EET), 11,12-epoxy-(5Z,8Z,14Z)-eicosatrienoate (11,12-EET) and 14,15-epoxy-(5Z,8Z,11Z)-eicosatrienoate (14,15-EET) and the linoleic acid metabolites 12,13-epoxy-(9Z)-octadecenoate (12,13-EpOME) and 9,10-epoxy-(12Z)-octadecenoate (9,10-EpOME). These epoxides function as lipid signaling molecules, the enzyme can deplete the supply of the epoxide signal by transforming them into diol species that are more readily eliminated through excretion. This chain is Epoxide hydrolase 1, found in Caenorhabditis elegans.